A 305-amino-acid chain; its full sequence is Tyrosine recombinase XerC (305 aa).

The region spanning 4-95 (TQIQELIIKW…AIKNFYKFLE (92 aa)) is the Core-binding (CB) domain. Residues 116-298 (LLPKALSEEE…SIKHLETAYV (183 aa)) form the Tyr recombinase domain. Catalysis depends on residues R159, K182, H250, R253, and H276. Y285 acts as the O-(3'-phospho-DNA)-tyrosine intermediate in catalysis.

The protein belongs to the 'phage' integrase family. XerC subfamily. In terms of assembly, forms a cyclic heterotetrameric complex composed of two molecules of XerC and two molecules of XerD.

The protein resides in the cytoplasm. Site-specific tyrosine recombinase, which acts by catalyzing the cutting and rejoining of the recombining DNA molecules. The XerC-XerD complex is essential to convert dimers of the bacterial chromosome into monomers to permit their segregation at cell division. It also contributes to the segregational stability of plasmids. The protein is Tyrosine recombinase XerC of Rickettsia bellii (strain RML369-C).